The sequence spans 327 residues: Urokinase plasminogen activator surface receptor (327 aa).

Positions 1–23 are cleaved as a signal peptide; sequence MGLPRRLLLLLLLATTCVPASQG. UPAR/Ly6 domains lie at 24 to 117, 117 to 212, and 213 to 298; these read LQCM…GRYL, LECA…PPNG, and FQCY…SPTG. Disulfide bonds link C26-C47, C29-C35, and C40-C68. N32 carries N-linked (GlcNAc...) asparagine glycosylation. N75 is a glycosylation site (N-linked (GlcNAc...) asparagine). Disulfide bonds link C94–C99, C119–C146, C122–C129, C139–C168, C174–C191, C192–C197, C215–C243, C218–C226, C236–C262, C268–C287, and C288–C293. N-linked (GlcNAc...) asparagine glycans are attached at residues N183, N193, N221, N254, and N282. G298 is lipidated: GPI-anchor amidated glycine. A propeptide spans 299-327 (removed in mature form); sequence GAPRPGPAQLSLIASLLLTLGLWGVLLWT.

As to quaternary structure, monomer. Interacts (via the UPAR/Ly6 domains) with SRPX2. Interacts with MRC2. Interacts with SORL1 (via N-terminal ectodomain); this interaction decreases PLAUR internalization. The ternary complex composed of PLAUR-PLAU-SERPINE1 also interacts with SORL1. Interacts with CD82; this interaction prevents PLAUR from binding to its high affinity ligand PLAU. As to expression, expressed in angiogenic endothelial cells (at protein level).

The protein resides in the cell membrane. It localises to the secreted. Acts as a receptor for urokinase plasminogen activator. Plays a role in localizing and promoting plasmin formation. Mediates the proteolysis-independent signal transduction activation effects of U-PA. The polypeptide is Urokinase plasminogen activator surface receptor (Plaur) (Mus musculus (Mouse)).